Reading from the N-terminus, the 60-residue chain is UPF0434 protein NMA0874 (60 aa).

This sequence belongs to the UPF0434 family.

This Neisseria meningitidis serogroup A / serotype 4A (strain DSM 15465 / Z2491) protein is UPF0434 protein NMA0874.